The sequence spans 245 residues: Uridylate kinase (245 aa).

15 to 18 (KLSG) is a binding site for ATP. The interval 23–28 (GDEGFG) is involved in allosteric activation by GTP. G57 is a UMP binding site. ATP-binding residues include G58 and R62. Residues D77 and 138–145 (TGNPFCTT) contribute to the UMP site. Positions 165, 171, and 174 each coordinate ATP.

Belongs to the UMP kinase family. In terms of assembly, homohexamer.

It localises to the cytoplasm. The catalysed reaction is UMP + ATP = UDP + ADP. The protein operates within pyrimidine metabolism; CTP biosynthesis via de novo pathway; UDP from UMP (UMPK route): step 1/1. Its activity is regulated as follows. Allosterically activated by GTP. Inhibited by UTP. Functionally, catalyzes the reversible phosphorylation of UMP to UDP. This chain is Uridylate kinase, found in Shewanella baltica (strain OS155 / ATCC BAA-1091).